A 51-amino-acid polypeptide reads, in one-letter code: Nawaprin (51 aa).

The WAP domain maps to 1–50; it reads NEKSGSCPDMSMPIPPLGICKTLCNSDSGCPNVQKCCKNGCGFMTCTTPV. 4 disulfide bridges follow: cysteine 7-cysteine 37, cysteine 20-cysteine 41, cysteine 24-cysteine 36, and cysteine 30-cysteine 46.

As to expression, expressed by the venom gland.

It localises to the secreted. Functionally, damages membranes of susceptible bacteria. Has no hemolytic activity. Not toxic to mice. Does not inhibit the proteinases elastase and cathepsin G. This is Nawaprin from Naja nigricollis (Black-necked spitting cobra).